We begin with the raw amino-acid sequence, 763 residues long: Thyrotropin receptor (763 aa).

The signal sequence occupies residues 1–21 (MRPTPLLRLALFLVLPSSLGG). Residues 22–412 (ERCPSPPCEC…EFNPCEDIMG (391 aa)) lie on the Extracellular side of the membrane. Cys-31 and Cys-41 are disulfide-bonded. An LRR 1 repeat occupies 51-74 (PPSTQTLKFIETHLKTIPSRAFSN). N-linked (GlcNAc...) asparagine glycans are attached at residues Asn-77 and Asn-99. 5 LRR repeats span residues 125-150 (LPLL…IYST), 151-174 (DVFF…AFQG), 176-199 (CNET…AFNG), 201-223 (KLDA…AFAG), and 225-248 (YSGP…GLEH). 2 N-linked (GlcNAc...) asparagine glycosylation sites follow: Asn-177 and Asn-198. Asn-302 carries an N-linked (GlcNAc...) asparagine glycan. Tyr-384 carries the post-translational modification Sulfotyrosine. The helical transmembrane segment at 413–440 (YKFLRIVVWFVSLLALLGNVFVLVILLT) threads the bilayer. Over 441–449 (SHYKLTVPR) the chain is Cytoplasmic. A helical membrane pass occupies residues 450–472 (FLMCNLAFADFCMGLYLLLIASV). Residues 473–493 (DLYTQSEYYNHAIDWQTGPGC) lie on the Extracellular side of the membrane. A disulfide bridge links Cys-493 with Cys-568. The chain crosses the membrane as a helical span at residues 494-516 (NTAGFFTVFASELSVYTLTVITL). Residues 517-536 (ERWHAITFAMRLDRKIRLWH) are Cytoplasmic-facing. The chain crosses the membrane as a helical span at residues 537 to 559 (AYVIMLGGWVCCFLLALLPLVGI). Topologically, residues 560 to 579 (SSYAKVSICLPMDTETPLAL) are extracellular. Residues 580–601 (AYIILVLLLNIIAFIIVCACYV) traverse the membrane as a helical segment. Over 602-624 (KIYITVRNPHYNPGDKDTRIAKR) the chain is Cytoplasmic. Residues 625–648 (MAVLIFTDFMCMAPISFYALSALM) form a helical membrane-spanning segment. The Extracellular portion of the chain corresponds to 649–659 (NKPLITVTNSK). Residues 660–681 (ILLVLFYPLNSCANPFLYAIFT) traverse the membrane as a helical segment. Residues 682-763 (KAFQRDVFML…TSKEYKRTVL (82 aa)) are Cytoplasmic-facing. The tract at residues 742–763 (ENSHLTPKQQDQTSKEYKRTVL) is disordered. The segment covering 744-753 (SHLTPKQQDQ) has biased composition (polar residues). The segment covering 754-763 (TSKEYKRTVL) has biased composition (basic and acidic residues). Positions 761 to 763 (TVL) match the PDZ-binding motif.

The protein belongs to the G-protein coupled receptor 1 family. FSH/LSH/TSH subfamily. In terms of assembly, interacts with heterodimer GPHA2:GPHB5; this interaction stimulates cAMP production. Interacts (via the PDZ-binding motif) with SCRIB; regulates TSHR trafficking and function. In terms of processing, glycosylated. Post-translationally, sulfated. Sulfation on Tyr-384 plays a role in thyrotropin receptor binding and activation.

It is found in the cell membrane. It localises to the basolateral cell membrane. In terms of biological role, receptor for the thyroid-stimulating hormone (TSH) or thyrotropin. Also acts as a receptor for the heterodimeric glycoprotein hormone (GPHA2:GPHB5) or thyrostimulin. The activity of this receptor is mediated by G proteins which activate adenylate cyclase. Plays a central role in controlling thyroid cell metabolism. This chain is Thyrotropin receptor (TSHR), found in Bos taurus (Bovine).